Here is an 834-residue protein sequence, read N- to C-terminus: Glycerol-3-phosphate acyltransferase (834 aa).

Positions 309 to 314 match the HXXXXD motif motif; the sequence is CHRSHI.

This sequence belongs to the GPAT/DAPAT family.

It is found in the cell inner membrane. The enzyme catalyses sn-glycerol 3-phosphate + an acyl-CoA = a 1-acyl-sn-glycero-3-phosphate + CoA. It participates in phospholipid metabolism; CDP-diacylglycerol biosynthesis; CDP-diacylglycerol from sn-glycerol 3-phosphate: step 1/3. The polypeptide is Glycerol-3-phosphate acyltransferase (Pseudomonas aeruginosa (strain UCBPP-PA14)).